The following is a 296-amino-acid chain: Decaprenyl diphosphate synthase (296 aa).

Positions 1-58 (MVRNERTLKSTDFPQLPPAPDDYPTFPDKSTWPVVFPMLPPSPDGGPRRPPQHTSKAV) are disordered. The active site involves Asp-76. Asp-76 provides a ligand contact to Mg(2+). Residues 77–80 (GNGR), Trp-81, Arg-89, His-93, and 121–123 (STE) each bind substrate. The active-site Proton acceptor is Asn-124. Substrate-binding positions include Trp-125, Arg-127, Arg-244, and 250–252 (RSS). Glu-263 provides a ligand contact to Mg(2+).

This sequence belongs to the UPP synthase family. In terms of assembly, homodimer. It depends on Mg(2+) as a cofactor.

It localises to the cell membrane. The catalysed reaction is (2Z,6E)-farnesyl diphosphate + 7 isopentenyl diphosphate = (2Z,6Z,10Z,14Z,18Z,22Z,26Z,30Z,34E)-decaprenyl diphosphate + 7 diphosphate. It catalyses the reaction n isopentenyl diphosphate + (2E,6E)-farnesyl diphosphate = a di-trans,poly-cis-polyprenyl diphosphate + n diphosphate. In terms of biological role, catalyzes the sequential condensation of isopentenyl diphosphate (IPP) in the cis configuration with (2Z,6E)-farnesyl diphosphate (Z-FPP or EZ-FPP) generating the 50 carbon product trans,polycis-decaprenyl diphosphate. When (2E,6E)-farnesyl diphosphate (E-FPP or EE-FPP) is used in vitro, both primary products decaprenyl diphosphate and (2E,6E,10E)-geranylgeranyl diphosphate (EEE-GGPP) are synthesized. M.tuberculosis does not synthesize (2E,6E,10Z)-geranylgeranyl diphosphate (EEZ-GGPP) and heptaprenyl diphosphate. Can also accept many different allylic substrates, including E-geranyl diphosphate (E-GPP), neryl diphosphate (NPP), and all-trans-geranyl-geranyl diphosphate. This chain is Decaprenyl diphosphate synthase (uppS), found in Mycobacterium leprae (strain TN).